We begin with the raw amino-acid sequence, 305 residues long: Flavin-dependent thymidylate synthase (305 aa).

The ThyX domain occupies 50-261 (GFVRLIDYLG…PCATASFENH (212 aa)). Residues serine 96, 119-121 (RHR), and glutamate 127 each bind FAD. DUMP is bound by residues 116-119 (QWMR), 127-131 (EVSSR), and arginine 200. The ThyX motif motif lies at 119-129 (RHRTARISEVS). FAD-binding positions include 216-218 (DLH) and histidine 222. Arginine 227 serves as a coordination point for dUMP. Catalysis depends on arginine 227, which acts as the Involved in ionization of N3 of dUMP, leading to its activation.

It belongs to the thymidylate synthase ThyX family. Homotetramer. FAD is required as a cofactor.

The catalysed reaction is dUMP + (6R)-5,10-methylene-5,6,7,8-tetrahydrofolate + NADPH + H(+) = dTMP + (6S)-5,6,7,8-tetrahydrofolate + NADP(+). It participates in pyrimidine metabolism; dTTP biosynthesis. In terms of biological role, catalyzes the reductive methylation of 2'-deoxyuridine-5'-monophosphate (dUMP) to 2'-deoxythymidine-5'-monophosphate (dTMP) while utilizing 5,10-methylenetetrahydrofolate (mTHF) as the methyl donor, and NADPH and FADH(2) as the reductant. This is Flavin-dependent thymidylate synthase from Treponema pallidum (strain Nichols).